The primary structure comprises 566 residues: FAD-dependent monooxygenase asqG (566 aa).

The N-terminal stretch at 1-19 (MAAFTVIIIGGSISGLTLA) is a signal peptide. 5 residues coordinate FAD: Glu-33, Val-47, Arg-113, Asp-313, and Ala-326. A run of 2 helical transmembrane segments spans residues 448–468 (ASSTVLWIILMLGMASLGAVW) and 482–502 (GYTLLTLSTFYNLMILFASAV).

Belongs to the paxM FAD-dependent monooxygenase family. It depends on FAD as a cofactor.

The protein resides in the membrane. It catalyses the reaction [(1'E)-3'-hydroxy-3',7'-dimethylocta-1',6'-dien-1'-yl]-quinolinone B + NADPH + O2 + H(+) = [(1'E)-5'-(3',3'-dimethyloxiran-2'-yl)-3'-hydroxy-3'-methylpent-1'-en-1'-yl]-quinolinone B + NADP(+) + H2O. It functions in the pathway secondary metabolite biosynthesis. It participates in alkaloid biosynthesis. Its pathway is mycotoxin biosynthesis. Its function is as follows. FAD-dependent monooxygenase; part of the gene cluster that mediates the biosynthesis of the aspoquinolone mycotoxins. Within the pathway, the FAD-dependent monooxygenase asqG catalyzes the epoxidation of the terminal C7'-C8' olefin to produce the intermediate [(1'E)-5'-(3',3'-dimethyloxiran-2'-yl)-3'-hydroxy-3'-methylpent-1'-en-1'-yl]-quinolinone B. The first step of the pathway is catalyzed by the nonribosomal peptide synthetase asqK that condenses anthranilic acid and O-methyl-L-tyrosine to produce 4'-methoxycyclopeptin. 4'-methoxycyclopeptin is then converted to 4'-methoxydehydrocyclopeptin by the ketoglutarate-dependent dioxygenase asqJ. AsqJ also converts its first product 4'-methoxydehydrocyclopeptin to 4'-methoxycyclopenin. The following conversion of 4'-methoxycyclopenin into 4'-methoxyviridicatin is catalyzed by the cyclopenase asqI. 4'-methoxyviridicatin is the precursor of quinolone natural products, and is further converted to quinolinone B. The prenyltransferase asqH1 then catalyzes the canonical Friedel-Crafts alkylation of quinolinone B with dimethylallyl cation to yield dimethylallyl quinolone, which is subjected to FAD-dependent dehydrogenation by the FAD-linked oxidoreductase asqF to yield conjugated aryl diene. The delta(3') double bond then serves as the site of the second alkylation with DMAPP catalyzed by the prenyltransferase asqH2 to yield a carbenium ion intermediate, which can be attacked by H(2)O to yield a styrenyl quinolone containing a C3'-hydroxyprenyl chain. The FAD-dependent monooxygenase asqG performs epoxidation of the terminal C7'-C8' olefin. Finally, after dehydratation of the epoxide at C3 by asqC, the quinolone epoxide rearrangement protein asqO catalyzes an enzymatic 3-exo-tet cyclization to yield the cyclopropyl-THF ring system in aspoquinolone. In Emericella nidulans (strain FGSC A4 / ATCC 38163 / CBS 112.46 / NRRL 194 / M139) (Aspergillus nidulans), this protein is FAD-dependent monooxygenase asqG.